A 472-amino-acid chain; its full sequence is F-box protein At3g03040 (472 aa).

The 49-residue stretch at 1-49 (MDLLSSLPDEVRCLILSFLTTKESASTSVLSKKWRNLFALVPNLDFDDS) folds into the F-box domain.

This Arabidopsis thaliana (Mouse-ear cress) protein is F-box protein At3g03040.